The chain runs to 553 residues: Non-SCF-type F-box protein ROY1 (553 aa).

Residues 3–49 (FQDQDIFIVFSHASLFLNQNDLLSLSLTSKKMHDMIAIPRLYSNIHI) enclose the F-box domain.

Interacts with SKP1 and YPT32; SKP1 is required for the interaction with YPT32.

It localises to the cytoplasm. The protein localises to the nucleus. Its subcellular location is the cytoplasmic vesicle membrane. Its function is as follows. Non-SCF-type F-box protein involved in the endocytic with the vacuolar sorting pathway. Acts as a repressor of YPT52 by inhibiting the formation of active, GTP-bound, YPT52. Involved in the defense mechanism against methylmercury toxicity. This Saccharomyces cerevisiae (strain ATCC 204508 / S288c) (Baker's yeast) protein is Non-SCF-type F-box protein ROY1 (ROY1).